The sequence spans 466 residues: Argininosuccinate lyase 1 (466 aa).

The protein belongs to the lyase 1 family. Argininosuccinate lyase subfamily.

It localises to the cytoplasm. The enzyme catalyses 2-(N(omega)-L-arginino)succinate = fumarate + L-arginine. It participates in amino-acid biosynthesis; L-arginine biosynthesis; L-arginine from L-ornithine and carbamoyl phosphate: step 3/3. The polypeptide is Argininosuccinate lyase 1 (Agrobacterium fabrum (strain C58 / ATCC 33970) (Agrobacterium tumefaciens (strain C58))).